The sequence spans 266 residues: uncharacterized protein (266 aa).

The chain crosses the membrane as a helical span at residues 12–28; that stretch reads ILAAGLAIGCAGGYYAY. The region spanning 40-140 is the FAD-binding FR-type domain; sequence EIYAPFTVNK…RGPFKTTKLD (101 aa).

This sequence belongs to the flavoprotein pyridine nucleotide cytochrome reductase family. FAD serves as cofactor.

The protein resides in the mitochondrion outer membrane. This is an uncharacterized protein from Schizosaccharomyces pombe (strain 972 / ATCC 24843) (Fission yeast).